The chain runs to 323 residues: Methenyltetrahydromethanopterin cyclohydrolase (323 aa).

The protein belongs to the MCH family.

The protein resides in the cytoplasm. It catalyses the reaction 5,10-methenyl-5,6,7,8-tetrahydromethanopterin + H2O = N(5)-formyl-5,6,7,8-tetrahydromethanopterin + H(+). Its pathway is one-carbon metabolism; methanogenesis from CO(2); 5,10-methenyl-5,6,7,8-tetrahydromethanopterin from CO(2): step 3/3. Functionally, catalyzes the reversible interconversion of 5-formyl-H(4)MPT to methenyl-H(4)MPT(+). In Methanococcus maripaludis (strain C5 / ATCC BAA-1333), this protein is Methenyltetrahydromethanopterin cyclohydrolase.